The sequence spans 228 residues: Adapter protein MecA (228 aa).

It belongs to the MecA family. In terms of assembly, homodimer.

In terms of biological role, enables the recognition and targeting of unfolded and aggregated proteins to the ClpC protease or to other proteins involved in proteolysis. The sequence is that of Adapter protein MecA from Lacticaseibacillus paracasei (strain ATCC 334 / BCRC 17002 / CCUG 31169 / CIP 107868 / KCTC 3260 / NRRL B-441) (Lactobacillus paracasei).